The chain runs to 407 residues: TOM1-like protein 1 (407 aa).

N-acetylglycine is present on G2. The 129-residue stretch at 55–183 folds into the VHS domain; the sequence is ATTENLEEPD…SLKARGIRFP (129 aa). In terms of domain architecture, GAT spans 228 to 315; the sequence is FTAEQTKEAF…TLSKYEEMNK (88 aa). A disordered region spans residues 315–407; the sequence is KPSAPLTSHE…SSKNDDLIRF (93 aa). The residue at position 337 (S337) is a Phosphoserine. Residues 337 to 347 show a composition bias toward basic and acidic residues; the sequence is SPIHGREESLV. Residues 353–364 are compositionally biased toward gly residues; the sequence is VRGGFHGGGGSG. The span at 388–407 shows a compositional bias: basic and acidic residues; that stretch reads PDHDPKKEQSSSKNDDLIRF.

Belongs to the TOM1 family. In terms of tissue distribution, ubiquitously expressed.

The protein resides in the membrane. Might contribute to the loading of the ESCRT machinery. The sequence is that of TOM1-like protein 1 from Arabidopsis thaliana (Mouse-ear cress).